The primary structure comprises 89 residues: Small ribosomal subunit protein uS15 (89 aa).

Belongs to the universal ribosomal protein uS15 family. In terms of assembly, part of the 30S ribosomal subunit. Forms a bridge to the 50S subunit in the 70S ribosome, contacting the 23S rRNA.

Functionally, one of the primary rRNA binding proteins, it binds directly to 16S rRNA where it helps nucleate assembly of the platform of the 30S subunit by binding and bridging several RNA helices of the 16S rRNA. Its function is as follows. Forms an intersubunit bridge (bridge B4) with the 23S rRNA of the 50S subunit in the ribosome. The chain is Small ribosomal subunit protein uS15 from Bradyrhizobium sp. (strain BTAi1 / ATCC BAA-1182).